The sequence spans 251 residues: Flap endonuclease Xni (251 aa).

Aspartate 104 serves as a coordination point for Mg(2+). A 5'-3' exonuclease domain is found at 160-249 (VLPRQLPDYW…IDGNLQQLRL (90 aa)). Leucine 171, alanine 172, proline 180, valine 182, and isoleucine 185 together coordinate K(+). Positions 184–189 (GIGPKS) are interaction with DNA.

Belongs to the Xni family. Mg(2+) is required as a cofactor. Requires K(+) as cofactor.

Its function is as follows. Has flap endonuclease activity. During DNA replication, flap endonucleases cleave the 5'-overhanging flap structure that is generated by displacement synthesis when DNA polymerase encounters the 5'-end of a downstream Okazaki fragment. This Salmonella schwarzengrund (strain CVM19633) protein is Flap endonuclease Xni.